A 276-amino-acid polypeptide reads, in one-letter code: NH(3)-dependent NAD(+) synthetase (276 aa).

43 to 50 is an ATP binding site; the sequence is GISGGVDS. D49 serves as a coordination point for Mg(2+). A deamido-NAD(+)-binding site is contributed by R146. Residue T166 participates in ATP binding. Residue E171 participates in Mg(2+) binding. Positions 179 and 186 each coordinate deamido-NAD(+). ATP is bound by residues K195 and T217. 266-267 lines the deamido-NAD(+) pocket; the sequence is HK.

The protein belongs to the NAD synthetase family. As to quaternary structure, homodimer.

The enzyme catalyses deamido-NAD(+) + NH4(+) + ATP = AMP + diphosphate + NAD(+) + H(+). Its pathway is cofactor biosynthesis; NAD(+) biosynthesis; NAD(+) from deamido-NAD(+) (ammonia route): step 1/1. Functionally, catalyzes the ATP-dependent amidation of deamido-NAD to form NAD. Uses ammonia as a nitrogen source. This is NH(3)-dependent NAD(+) synthetase from Vibrio cholerae serotype O1 (strain ATCC 39541 / Classical Ogawa 395 / O395).